The chain runs to 282 residues: Virginiamycin B lyase (282 aa).

His-217 is a binding site for substrate. Glu-256 is a Mg(2+) binding site. The active-site Proton acceptor is the His-258. Glu-273 serves as a coordination point for Mg(2+).

This sequence belongs to the Vgb family. In terms of assembly, monomer. Requires Mg(2+) as cofactor.

In terms of biological role, inactivates the type B streptogramin antibiotics by linearizing the lactone ring at the ester linkage, generating a free phenylglycine carboxylate and converting the threonyl moiety into 2-amino-butenoic acid. In Mycolicibacterium smegmatis (strain ATCC 700084 / mc(2)155) (Mycobacterium smegmatis), this protein is Virginiamycin B lyase.